We begin with the raw amino-acid sequence, 125 residues long: Secreted RxLR effector protein RXLR-C13 (125 aa).

An N-terminal signal peptide occupies residues 1 to 23 (MVNSLTFTLVVVCLVRSCDGVAA). A RxLR-dEER motif is present at residues 43 to 73 (RVLQETATANDDVKKLSTSTKVDSKLNQEIK). Residue Asn-85 is glycosylated (N-linked (GlcNAc...) asparagine). The chain crosses the membrane as a helical span at residues 106–123 (FFILATILLFPIAAYMVA).

This sequence belongs to the RxLR effector family.

It localises to the secreted. The protein localises to the host endoplasmic reticulum membrane. Its function is as follows. Secreted effector that does not suppress pattern-triggered immunity (PTI) in plant host. The sequence is that of Secreted RxLR effector protein RXLR-C13 from Plasmopara halstedii (Downy mildew of sunflower).